The sequence spans 100 residues: NADH-quinone oxidoreductase subunit K (100 aa).

3 helical membrane-spanning segments follow: residues Leu4–Ile24, Leu28–Val48, and Val60–Leu80.

The protein belongs to the complex I subunit 4L family. NDH-1 is composed of 13 different subunits. Subunits NuoA, H, J, K, L, M, N constitute the membrane sector of the complex.

It localises to the cell inner membrane. The catalysed reaction is a quinone + NADH + 5 H(+)(in) = a quinol + NAD(+) + 4 H(+)(out). Functionally, NDH-1 shuttles electrons from NADH, via FMN and iron-sulfur (Fe-S) centers, to quinones in the respiratory chain. The immediate electron acceptor for the enzyme in this species is believed to be ubiquinone. Couples the redox reaction to proton translocation (for every two electrons transferred, four hydrogen ions are translocated across the cytoplasmic membrane), and thus conserves the redox energy in a proton gradient. In Shigella sonnei (strain Ss046), this protein is NADH-quinone oxidoreductase subunit K.